The primary structure comprises 303 residues: Secreted mono- and diacylglycerol lipase LIP4 (303 aa).

The signal sequence occupies residues 1-16 (MHFLAFLLCLIPLALC). Residues Cys-54 and Cys-293 are joined by a disulfide bond. Catalysis depends on Ser-167, which acts as the Nucleophile. The active site involves Asp-224.

Belongs to the AB hydrolase superfamily. Lipase family. Class 3 subfamily.

The protein localises to the secreted. The catalysed reaction is a monoacylglycerol + H2O = glycerol + a fatty acid + H(+). It carries out the reaction a diacylglycerol + H2O = a monoacylglycerol + a fatty acid + H(+). In terms of biological role, secreted lipase involved in Dandruff and seborrheic dermatitis (D/SD) probably via lipase-mediated breakdown of sebaceous lipids and release of irritating free fatty acids. Shows activity against monoglyceride and diglyceride substrates. Due to an absence of fatty acid synthase genes in Malassezia species, secretory lipases are essential for the yeast to generate free fatty acids from degradation of sebum and assimilate them as lipid sources for growth. Plays an essential role at the pathogen-host interface during disease progression. The polypeptide is Secreted mono- and diacylglycerol lipase LIP4 (Malassezia restricta (strain ATCC 96810 / NBRC 103918 / CBS 7877) (Seborrheic dermatitis infection agent)).